Reading from the N-terminus, the 88-residue chain is UPF0335 protein MexAM1_META1p2947 (88 aa).

Belongs to the UPF0335 family.

The polypeptide is UPF0335 protein MexAM1_META1p2947 (Methylorubrum extorquens (strain ATCC 14718 / DSM 1338 / JCM 2805 / NCIMB 9133 / AM1) (Methylobacterium extorquens)).